A 218-amino-acid polypeptide reads, in one-letter code: Uridine kinase (218 aa).

An ATP-binding site is contributed by 16–23 (GGSGSGKT).

Belongs to the uridine kinase family.

It is found in the cytoplasm. The catalysed reaction is uridine + ATP = UMP + ADP + H(+). It carries out the reaction cytidine + ATP = CMP + ADP + H(+). It participates in pyrimidine metabolism; CTP biosynthesis via salvage pathway; CTP from cytidine: step 1/3. Its pathway is pyrimidine metabolism; UMP biosynthesis via salvage pathway; UMP from uridine: step 1/1. This chain is Uridine kinase, found in Limosilactobacillus reuteri (strain DSM 20016) (Lactobacillus reuteri).